A 430-amino-acid chain; its full sequence is Adenylosuccinate synthetase (430 aa).

GTP contacts are provided by residues Gly-13 to Lys-19 and Gly-41 to Thr-43. Residue Asp-14 is the Proton acceptor of the active site. Residues Asp-14 and Gly-41 each contribute to the Mg(2+) site. Residues Asp-14 to Lys-17, Asn-39 to His-42, Thr-130, Arg-144, Gln-225, Thr-240, and Arg-304 each bind IMP. His-42 functions as the Proton donor in the catalytic mechanism. Position 300 to 306 (Ala-300 to Arg-306) interacts with substrate. Residues Arg-306, Lys-332–Asp-334, and Ser-414–Gly-416 contribute to the GTP site.

The protein belongs to the adenylosuccinate synthetase family. Homodimer. It depends on Mg(2+) as a cofactor.

It is found in the cytoplasm. It carries out the reaction IMP + L-aspartate + GTP = N(6)-(1,2-dicarboxyethyl)-AMP + GDP + phosphate + 2 H(+). It functions in the pathway purine metabolism; AMP biosynthesis via de novo pathway; AMP from IMP: step 1/2. In terms of biological role, plays an important role in the de novo pathway of purine nucleotide biosynthesis. Catalyzes the first committed step in the biosynthesis of AMP from IMP. This is Adenylosuccinate synthetase from Stenotrophomonas maltophilia (strain R551-3).